A 592-amino-acid chain; its full sequence is 3-hydroxy-3-methylglutaryl-coenzyme A reductase 1 (592 aa).

Positions 1–45 are disordered; that stretch reads MDLRRRPPKPPVTNNNNSNGSFRSYQPRTSDDDHRRRATTIAPPP. Positions 12 to 28 are enriched in polar residues; it reads VTNNNNSNGSFRSYQPR. 2 N-linked (GlcNAc...) asparagine glycosylation sites follow: Asn-16 and Asn-19. 2 helical membrane passes run 47–69 and 97–117; these read ASDALPLPLYLTNAVFFTLFFSV and AIIALIASFIYLLGFFGIDFV. The tract at residues 118–171 is linker; the sequence is QSFISRASGDAWDLADTIDDDDHRLVTCSPPTPIVSVAKLPNPEPIVTESLPEE. The tract at residues 172 to 592 is catalytic; that stretch reads DEEIVKSVID…GATTTTTTTT (421 aa). The active-site Charge relay system is the Glu-265. N-linked (GlcNAc...) asparagine glycosylation occurs at Asn-329. Active-site charge relay system residues include Lys-397 and Asp-473. Residue His-571 is the Proton donor of the active site. The N-linked (GlcNAc...) asparagine glycan is linked to Asn-575. Phosphoserine is present on Ser-577.

This sequence belongs to the HMG-CoA reductase family. In terms of assembly, interacts (via N-terminus) with B''ALPHA and B''BETA. Inactivated by phosphorylation at Ser-577 by KIN10 activated form. Probably also phosphorylated at additional sites. As to expression, found in all tissues. Isoform Short is expressed at low levels specifically in flowers. Expressed in both the tapetum and microspores.

It localises to the endoplasmic reticulum membrane. It catalyses the reaction (R)-mevalonate + 2 NADP(+) + CoA = (3S)-3-hydroxy-3-methylglutaryl-CoA + 2 NADPH + 2 H(+). Its pathway is metabolic intermediate biosynthesis; (R)-mevalonate biosynthesis; (R)-mevalonate from acetyl-CoA: step 3/3. Its activity is regulated as follows. Regulated at the post-translational level in response to alterations of sphingolipid and sterol biosynthetic pathways. Negatively regulated by a PP2A-dependent dephosphorylation occurring at a site different than Ser-577. Completely inhibited by mevinolin (IC(50) = 12.5 nM). Reversibly inactivated by phosphorylation at Ser-577 by spinach or Brassica oleracea HMGR kinases in a cell-free system. Down-regulated by KIN10 through its phosphorylation at Ser-577. Catalyzes the synthesis of mevalonate, the specific precursor of all isoprenoid compounds present in plants. In Arabidopsis thaliana (Mouse-ear cress), this protein is 3-hydroxy-3-methylglutaryl-coenzyme A reductase 1.